The following is a 619-amino-acid chain: Eukaryotic translation initiation factor 3 subunit D (619 aa).

The tract at residues Q99–I160 is disordered. A compositionally biased stretch (basic residues) spans K100 to G121. Residues E288 to P302 are RNA gate. A disordered region spans residues T588 to K619.

This sequence belongs to the eIF-3 subunit D family. Component of the eukaryotic translation initiation factor 3 (eIF-3) complex.

The protein localises to the cytoplasm. Functionally, mRNA cap-binding component of the eukaryotic translation initiation factor 3 (eIF-3) complex, which is involved in protein synthesis of a specialized repertoire of mRNAs and, together with other initiation factors, stimulates binding of mRNA and methionyl-tRNAi to the 40S ribosome. The eIF-3 complex specifically targets and initiates translation of a subset of mRNAs involved in cell proliferation. In the eIF-3 complex, eif3d specifically recognizes and binds the 7-methylguanosine cap of a subset of mRNAs. The protein is Eukaryotic translation initiation factor 3 subunit D of Aedes aegypti (Yellowfever mosquito).